Consider the following 613-residue polypeptide: Phosphoinositide phospholipase C 6 (613 aa).

The 145-residue stretch at 137–281 (QDMTAPLSHY…LLHRIIISTK (145 aa)) folds into the PI-PLC X-box domain. Active-site residues include histidine 152 and histidine 198. The disordered stretch occupies residues 288-349 (ESRNPIVKQK…ASEDQKPAYK (62 aa)). Residues 349–465 (KRLITIHAGK…GYVKKPNFLM (117 aa)) form the PI-PLC Y-box domain. In terms of domain architecture, C2 spans 466–595 (KKGFHDEVFD…PGIRSVPLYD (130 aa)).

The cofactor is Ca(2+). As to expression, expressed in leaves, flowers and siliques, but not in roots.

The protein resides in the cell membrane. It catalyses the reaction a 1,2-diacyl-sn-glycero-3-phospho-(1D-myo-inositol-4,5-bisphosphate) + H2O = 1D-myo-inositol 1,4,5-trisphosphate + a 1,2-diacyl-sn-glycerol + H(+). Its function is as follows. The production of the second messenger molecules diacylglycerol (DAG) and inositol 1,4,5-trisphosphate (IP3) is mediated by activated phosphatidylinositol-specific phospholipase C enzymes. The chain is Phosphoinositide phospholipase C 6 (PLC6) from Arabidopsis thaliana (Mouse-ear cress).